A 143-amino-acid chain; its full sequence is Ribonuclease HI (143 aa).

The region spanning 1–136 is the RNase H type-1 domain; the sequence is MQEIEIFCDG…CDSLAKLEAQ (136 aa). Mg(2+) is bound by residues aspartate 9, glutamate 47, aspartate 69, and aspartate 128.

Belongs to the RNase H family. Monomer. Mg(2+) is required as a cofactor.

It is found in the cytoplasm. It catalyses the reaction Endonucleolytic cleavage to 5'-phosphomonoester.. Endonuclease that specifically degrades the RNA of RNA-DNA hybrids. This is Ribonuclease HI (rnhA) from Helicobacter pylori (strain ATCC 700392 / 26695) (Campylobacter pylori).